The following is a 636-amino-acid chain: Topoisomerase I damage affected protein 7 (636 aa).

The segment covering 1 to 18 (MNSNSTIGRTTLGESDTI) has biased composition (polar residues). Disordered regions lie at residues 1-33 (MNSNSTIGRTTLGESDTISLSFSEPSSSLNSRS), 87-109 (TLVSSTDSSSSSEQDTYSSQYDP), 246-271 (NKDTTFPSSSRNTSTSFYSSSLSSTN), 299-326 (PTSSSVSSSSSKVPSNRPSSSSSSDDTT), and 339-362 (QSTTSSSIPPTTQTPSTSTISTSP). Residue asparagine 4 is glycosylated (N-linked (GlcNAc...) asparagine). Composition is skewed to low complexity over residues 19–33 (SLSFSEPSSSLNSRS) and 87–108 (TLVSSTDSSSSSEQDTYSSQYD). Asparagine 257 is a glycosylation site (N-linked (GlcNAc...) asparagine). Residues 457 to 477 (IVGSVVGSVGGILICVLVVWF) traverse the membrane as a helical segment. An N-linked (GlcNAc...) asparagine glycan is attached at asparagine 492. Over residues 510–541 (QAKEASLQAQDSGSQQRNTETASANNPFSNEF) the composition is skewed to polar residues. The disordered stretch occupies residues 510–551 (QAKEASLQAQDSGSQQRNTETASANNPFSNEFNFKARGNPPP). A Glycyl lysine isopeptide (Lys-Gly) (interchain with G-Cter in ubiquitin) cross-link involves residue lysine 512. N-linked (GlcNAc...) asparagine glycans are attached at residues asparagine 557, asparagine 562, and asparagine 626. Phosphoserine is present on serine 628.

Belongs to the TDA7 family.

It localises to the vacuole membrane. In Saccharomyces cerevisiae (strain ATCC 204508 / S288c) (Baker's yeast), this protein is Topoisomerase I damage affected protein 7 (TDA7).